The following is a 324-amino-acid chain: Rho crystallin (324 aa).

Position 2 is an N-acetylthreonine (threonine 2). An NADP(+)-binding site is contributed by 218–281 (SVLGSHRDRN…SFTPARIKQN (64 aa)).

Belongs to the aldo/keto reductase family. As to quaternary structure, monomer.

In Aquarana catesbeiana (American bullfrog), this protein is Rho crystallin.